We begin with the raw amino-acid sequence, 226 residues long: MNENLFTSFSAPTILGQPATIPIIMFPTLLIPTSKHLINNQLTTVQQNLIKLTLKQMMAPHNAKGQSWSLMLMSLITFITMTNLLGLLPHSFTPTTQLSMNLAMAIPLWAGTIITGLRFKTKNFLAHMLPQGTPTPLIPMLVMIETISLLIQPMALAVRLTANITAGHLLMHLIGNTMLTLSTINLSTTLLTSVLLMLLTILEIAVALIQAYVFTLLVNLYLHNNT.

A run of 6 helical transmembrane segments spans residues 11-31 (APTI…TLLI), 68-88 (WSLM…LGLL), 97-117 (QLSM…ITGL), 138-158 (IPML…ALAV), 164-184 (ITAG…LSTI), and 194-214 (VLLM…AYVF).

The protein belongs to the ATPase A chain family. As to quaternary structure, component of the ATP synthase complex composed at least of ATP5F1A/subunit alpha, ATP5F1B/subunit beta, ATP5MC1/subunit c (homooctomer), MT-ATP6/subunit a, MT-ATP8/subunit 8, ATP5ME/subunit e, ATP5MF/subunit f, ATP5MG/subunit g, ATP5MK/subunit k, ATP5MJ/subunit j, ATP5F1C/subunit gamma, ATP5F1D/subunit delta, ATP5F1E/subunit epsilon, ATP5PF/subunit F6, ATP5PB/subunit b, ATP5PD/subunit d, ATP5PO/subunit OSCP. ATP synthase complex consists of a soluble F(1) head domain (subunits alpha(3) and beta(3)) - the catalytic core - and a membrane F(0) domain - the membrane proton channel (subunits c, a, 8, e, f, g, k and j). These two domains are linked by a central stalk (subunits gamma, delta, and epsilon) rotating inside the F1 region and a stationary peripheral stalk (subunits F6, b, d, and OSCP). Interacts with DNAJC30; interaction is direct.

The protein resides in the mitochondrion inner membrane. It catalyses the reaction H(+)(in) = H(+)(out). In terms of biological role, subunit a, of the mitochondrial membrane ATP synthase complex (F(1)F(0) ATP synthase or Complex V) that produces ATP from ADP in the presence of a proton gradient across the membrane which is generated by electron transport complexes of the respiratory chain. ATP synthase complex consist of a soluble F(1) head domain - the catalytic core - and a membrane F(1) domain - the membrane proton channel. These two domains are linked by a central stalk rotating inside the F(1) region and a stationary peripheral stalk. During catalysis, ATP synthesis in the catalytic domain of F(1) is coupled via a rotary mechanism of the central stalk subunits to proton translocation. With the subunit c (ATP5MC1), forms the proton-conducting channel in the F(0) domain, that contains two crucial half-channels (inlet and outlet) that facilitate proton movement from the mitochondrial intermembrane space (IMS) into the matrix. Protons are taken up via the inlet half-channel and released through the outlet half-channel, following a Grotthuss mechanism. This chain is ATP synthase F(0) complex subunit a, found in Papio hamadryas (Hamadryas baboon).